A 132-amino-acid polypeptide reads, in one-letter code: UPF0299 membrane protein YohJ (132 aa).

The next 4 helical transmembrane spans lie at 5–25, 26–46, 63–83, and 93–113; these read LNII…LYAG, IFIA…MLIL, GCYV…VGVM, and FGPV…VVSW.

The protein belongs to the UPF0299 family.

The protein resides in the cell inner membrane. This chain is UPF0299 membrane protein YohJ, found in Shigella flexneri serotype 5b (strain 8401).